A 450-amino-acid chain; its full sequence is Zinc finger protein 277 (450 aa).

Position 2 is an N-acetylalanine (A2). 2 C2H2-type zinc fingers span residues 224–248 (LQCL…KKQH) and 355–381 (HQCR…ETKH).

It belongs to the ZNF277 family. Interacts (via zinc-finger domains) with RPS2/40S ribosomal protein S2, perhaps as nascent RPS2 is synthesized during translation; the interaction is direct; the interaction is extra-ribosomal. Interaction with RPS2 competes with the binding of RPS2 to protein arginine methyltransferase PRMT3. Interacts with Polycomb group (PcG) complex protein BMI1. May be part of a complex including at least ZNF277, BMI1 and RNF2/RING2.

The protein localises to the nucleus. Its function is as follows. Probable transcription factor. Involved in modulation of cellular senescence; represses transcription of the tumor suppressor gene INK4A/ARF, perhaps acting via the Polycomb group (PcG) complex PRC1. In Homo sapiens (Human), this protein is Zinc finger protein 277 (ZNF277).